Consider the following 235-residue polypeptide: Germin-like protein 1-4 (235 aa).

The first 27 residues, 1-27 (MAAKLPTVVLLASFAAVILSLAAPLLA), serve as a signal peptide directing secretion. Cys37 and Cys55 are joined by a disulfide. Asn60 is a glycosylation site (N-linked (GlcNAc...) asparagine). One can recognise a Cupin type-1 domain in the interval 69-226 (PGLGKPADVY…AFQVDGGVVE (158 aa)). The Mn(2+) site is built by His120, His122, Glu127, and His171.

It belongs to the germin family. Oligomer (believed to be a pentamer but probably hexamer).

Its subcellular location is the secreted. The protein localises to the extracellular space. It localises to the apoplast. Functionally, may play a role in plant defense. Probably has no oxalate oxidase activity even if the active site is conserved. The chain is Germin-like protein 1-4 from Oryza sativa subsp. japonica (Rice).